Reading from the N-terminus, the 417-residue chain is 4-hydroxy-3-methylbut-2-en-1-yl diphosphate synthase (flavodoxin) (417 aa).

Positions 304, 307, 350, and 357 each coordinate [4Fe-4S] cluster.

This sequence belongs to the IspG family. It depends on [4Fe-4S] cluster as a cofactor.

The catalysed reaction is (2E)-4-hydroxy-3-methylbut-2-enyl diphosphate + oxidized [flavodoxin] + H2O + 2 H(+) = 2-C-methyl-D-erythritol 2,4-cyclic diphosphate + reduced [flavodoxin]. Its pathway is isoprenoid biosynthesis; isopentenyl diphosphate biosynthesis via DXP pathway; isopentenyl diphosphate from 1-deoxy-D-xylulose 5-phosphate: step 5/6. Its function is as follows. Converts 2C-methyl-D-erythritol 2,4-cyclodiphosphate (ME-2,4cPP) into 1-hydroxy-2-methyl-2-(E)-butenyl 4-diphosphate. In Sinorhizobium medicae (strain WSM419) (Ensifer medicae), this protein is 4-hydroxy-3-methylbut-2-en-1-yl diphosphate synthase (flavodoxin).